The sequence spans 513 residues: MTAKRPLALLILDGWGYREDQESNAIFHANTPVLDNLKANYPNGLISGSGHDVGLPDGQMGNSEVGHINLGSGRIVYQELTRISKAIEDGEFDDNPALCKAVDAAIAANGAVHIMGLLSPGGVHSHEEHIEAMIRMAAKRGATKVYLHAFLDGRDTPPRSAKGSLAHFTELFASLNAGRIASIVGRYFAMDRDNRWDRVVQAYDLITQGKGKHSATNAVDALEAAYARDENDEFVAPTAIVDANGDSVSLNDNDALIFMNFRADRARQISRSFTDPAFAGFERAVTPKTHFVMLTEYAGDIQGDIAFPSEDLVNTLGEVLQNSGKTQLRISETEKYAHVTFFFNGGKEQPFDGEDRILINSPKVATYDLQPEMSSTELTDKLVEAIESAKYDVIICNYPNGDMVGHTGNFDAAVKACEAVDTCIGRVVDALAKVGGECLITADHGNAEQMRDPSTGQAHTAHTSELVPFIYVGRDASIAEGGRLSDIAPTMLNLMGQDIPAEMTGRVLITIKE.

Positions 13 and 63 each coordinate Mn(2+). The active-site Phosphoserine intermediate is S63. Substrate contacts are provided by residues H124, 154-155, R186, R192, 262-265, and K335; these read RD and RADR. 5 residues coordinate Mn(2+): D402, H406, D443, H444, and H462.

It belongs to the BPG-independent phosphoglycerate mutase family. As to quaternary structure, monomer. It depends on Mn(2+) as a cofactor.

It catalyses the reaction (2R)-2-phosphoglycerate = (2R)-3-phosphoglycerate. The protein operates within carbohydrate degradation; glycolysis; pyruvate from D-glyceraldehyde 3-phosphate: step 3/5. Catalyzes the interconversion of 2-phosphoglycerate and 3-phosphoglycerate. The chain is 2,3-bisphosphoglycerate-independent phosphoglycerate mutase from Shewanella amazonensis (strain ATCC BAA-1098 / SB2B).